A 95-amino-acid polypeptide reads, in one-letter code: Bombyxin C-2 (95 aa).

The first 19 residues, 1–19, serve as a signal peptide directing secretion; it reads MKLVILLVVVSAMLVLGGA. At Gln20 the chain carries Pyrrolidone carboxylic acid. Disulfide bonds link Cys27–Cys76, Cys39–Cys89, and Cys75–Cys80. A propeptide spans 47–67 (c peptide like); that stretch reads SGSQYAGYGWPWLPPFSSSRG.

The protein belongs to the insulin family. In terms of assembly, heterodimer of a B chain and an A chain linked by two disulfide bonds.

The protein resides in the secreted. Brain peptide responsible for activation of prothoracic glands to produce ecdysone in insects. The sequence is that of Bombyxin C-2 (BBXC2) from Bombyx mori (Silk moth).